Reading from the N-terminus, the 357-residue chain is Aurora kinase A- and ninein-interacting protein (357 aa).

Residues 71–91 are compositionally biased toward polar residues; that stretch reads LQPGKTNGSDQKSVSSHTESQ. Positions 71-98 are disordered; sequence LQPGKTNGSDQKSVSSHTESQINKESKK. Residues 187–357 form an interaction with AURKA region; the sequence is RKEEKGDSAR…EGNQVIRHQF (171 aa). Residues Ser267 and Ser292 each carry the phosphoserine modification. The interaction with RBBP8/CtIP stretch occupies residues 281–357; that stretch reads KDSWSQLFTE…EGNQVIRHQF (77 aa).

This sequence belongs to the AUNIP family. In terms of assembly, interacts (via C-terminus) with AURKA (via C-terminus). Interacts (via N-terminus) with NIN; this interaction blocks NIN phosphorylation by both AURKA and GSK3B. Identified in a complex with NIN and AURKA. Interacts with RBBP8/CtIP. Expressed in heart, skeletal muscles, placenta and testis.

Its subcellular location is the nucleus. It is found in the chromosome. The protein localises to the cytoplasm. The protein resides in the cytoskeleton. It localises to the microtubule organizing center. Its subcellular location is the centrosome. It is found in the spindle pole. In terms of biological role, DNA-binding protein that accumulates at DNA double-strand breaks (DSBs) following DNA damage and promotes DNA resection and homologous recombination. Serves as a sensor of DNA damage: binds DNA with a strong preference for DNA substrates that mimic structures generated at stalled replication forks, and anchors RBBP8/CtIP to DSB sites to promote DNA end resection and ensuing homologous recombination repair. Inhibits non-homologous end joining (NHEJ). Required for the dynamic movement of AURKA at the centrosomes and spindle apparatus during the cell cycle. This chain is Aurora kinase A- and ninein-interacting protein, found in Homo sapiens (Human).